The sequence spans 357 residues: Probable cinnamyl alcohol dehydrogenase (357 aa).

Cys47 contacts Zn(2+). Ser49 contributes to the NADP(+) binding site. Residues His69, Glu70, Cys100, Cys103, Cys106, Cys114, and Cys163 each coordinate Zn(2+). NADP(+)-binding positions include Thr167, Gly188–Gly193, Ser211–Lys216, Thr251, Gly275, and Ser298–Ile300.

Belongs to the zinc-containing alcohol dehydrogenase family. Homodimer. It depends on Zn(2+) as a cofactor.

The enzyme catalyses (E)-cinnamyl alcohol + NADP(+) = (E)-cinnamaldehyde + NADPH + H(+). It catalyses the reaction (E)-coniferol + NADP(+) = (E)-coniferaldehyde + NADPH + H(+). The catalysed reaction is (E)-sinapyl alcohol + NADP(+) = (E)-sinapaldehyde + NADPH + H(+). It carries out the reaction (E)-4-coumaroyl alcohol + NADP(+) = (E)-4-coumaraldehyde + NADPH + H(+). The enzyme catalyses (E)-caffeyl alcohol + NADP(+) = (E)-caffeyl aldehyde + NADPH + H(+). It participates in aromatic compound metabolism; phenylpropanoid biosynthesis. Involved in lignin biosynthesis. Catalyzes the final step specific for the production of lignin monomers. Catalyzes the NADPH-dependent reduction of coniferaldehyde, 5-hydroxyconiferaldehyde, sinapaldehyde, 4-coumaraldehyde and caffeyl aldehyde to their respective alcohols. This Pinus radiata (Monterey pine) protein is Probable cinnamyl alcohol dehydrogenase (CAD).